Reading from the N-terminus, the 336-residue chain is D-alanine--D-alanine ligase (336 aa).

The ATP-grasp domain occupies 124–330; the sequence is KMWFSALGIP…FATFLEQAIL (207 aa). 154–209 is an ATP binding site; sequence AFDEWGSVFIKAASQGSSVGCFPAHRREDIPGLVRKAFEYAPFVVVEKTIKARELE. Residues aspartate 284, glutamate 297, and asparagine 299 each contribute to the Mg(2+) site.

The protein belongs to the D-alanine--D-alanine ligase family. The cofactor is Mg(2+). It depends on Mn(2+) as a cofactor.

It localises to the cytoplasm. The enzyme catalyses 2 D-alanine + ATP = D-alanyl-D-alanine + ADP + phosphate + H(+). It participates in cell wall biogenesis; peptidoglycan biosynthesis. Functionally, cell wall formation. This Shewanella amazonensis (strain ATCC BAA-1098 / SB2B) protein is D-alanine--D-alanine ligase.